We begin with the raw amino-acid sequence, 382 residues long: Apolipoprotein A-IV (382 aa).

The N-terminal stretch at 1–20 (MFLKAVVLTLSLVAVTGAQA) is a signal peptide. 13 consecutive repeat copies span residues 33–54 (DYFS…KSEL), 60–81 (ALFQ…KKLV), 82–103 (SFAM…EEIR), 115–136 (PHAD…QRLG), 137–158 (PYAE…NQLT), 159–180 (AHAQ…ASLT), 181–202 (PYAD…GHLT), 203–224 (PYAD…RSLA), 225–246 (PYAQ…FQMK), 247–268 (KNAE…QKLV), 269–286 (PVAE…EELQ), 287–308 (KSLA…RNMG), and 309–330 (PYGE…QKLG). Residues 33-330 (DYFSQLSNNA…QVEELRQKLG (298 aa)) form a 13 X 22 AA approximate tandem repeats region.

This sequence belongs to the apolipoprotein A1/A4/E family. Homodimer. Phosphorylation sites are present in the extracellular medium.

It localises to the secreted. May have a role in chylomicrons and VLDL secretion and catabolism. Required for efficient activation of lipoprotein lipase by ApoC-II; potent activator of LCAT. Apoa-IV is a major component of HDL and chylomicrons. This chain is Apolipoprotein A-IV (APOA4), found in Mirounga angustirostris (Northern elephant seal).